A 146-amino-acid polypeptide reads, in one-letter code: Ribosomal RNA large subunit methyltransferase H (146 aa).

Residues L60, G93, and 112-117 contribute to the S-adenosyl-L-methionine site; that span reads MGKMTL.

The protein belongs to the RNA methyltransferase RlmH family. In terms of assembly, homodimer.

Its subcellular location is the cytoplasm. The enzyme catalyses pseudouridine(1915) in 23S rRNA + S-adenosyl-L-methionine = N(3)-methylpseudouridine(1915) in 23S rRNA + S-adenosyl-L-homocysteine + H(+). Specifically methylates the pseudouridine at position 1915 (m3Psi1915) in 23S rRNA. The sequence is that of Ribosomal RNA large subunit methyltransferase H from Koribacter versatilis (strain Ellin345).